A 621-amino-acid polypeptide reads, in one-letter code: UvrABC system protein C (621 aa).

The GIY-YIG domain maps to 20 to 106 (TQSGIYQFFD…IKSLKPKYNI (87 aa)). One can recognise a UVR domain in the interval 212 to 247 (KALLKILESKMHTLSHNLQFEEAAIMRDRIQKITQM).

The protein belongs to the UvrC family. As to quaternary structure, interacts with UvrB in an incision complex.

The protein localises to the cytoplasm. The UvrABC repair system catalyzes the recognition and processing of DNA lesions. UvrC both incises the 5' and 3' sides of the lesion. The N-terminal half is responsible for the 3' incision and the C-terminal half is responsible for the 5' incision. This is UvrABC system protein C from Helicobacter hepaticus (strain ATCC 51449 / 3B1).